Consider the following 49-residue polypeptide: Large ribosomal subunit protein bL33A (49 aa).

The protein belongs to the bacterial ribosomal protein bL33 family.

This is Large ribosomal subunit protein bL33A from Bacillus licheniformis (strain ATCC 14580 / DSM 13 / JCM 2505 / CCUG 7422 / NBRC 12200 / NCIMB 9375 / NCTC 10341 / NRRL NRS-1264 / Gibson 46).